The chain runs to 411 residues: Adenylosuccinate synthetase (411 aa).

Residues 11-17 (GDEGKGK) and 39-41 (GHT) each bind GTP. Asp12 (proton acceptor) is an active-site residue. Mg(2+)-binding residues include Asp12 and Gly39. IMP contacts are provided by residues 12–15 (DEGK), 37–40 (NAGH), Thr121, Arg135, Gln215, Thr230, and Arg294. The Proton donor role is filled by His40. 290–296 (TTTKRPR) is a binding site for substrate. GTP-binding positions include Arg296, 322-324 (KLD), and 400-402 (STS).

The protein belongs to the adenylosuccinate synthetase family. As to quaternary structure, homodimer. It depends on Mg(2+) as a cofactor.

It localises to the cytoplasm. The enzyme catalyses IMP + L-aspartate + GTP = N(6)-(1,2-dicarboxyethyl)-AMP + GDP + phosphate + 2 H(+). The protein operates within purine metabolism; AMP biosynthesis via de novo pathway; AMP from IMP: step 1/2. Plays an important role in the de novo pathway of purine nucleotide biosynthesis. Catalyzes the first committed step in the biosynthesis of AMP from IMP. In Helicobacter acinonychis (strain Sheeba), this protein is Adenylosuccinate synthetase.